The sequence spans 248 residues: 26.2 kDa heat shock protein, mitochondrial (248 aa).

The transit peptide at 1-32 directs the protein to the mitochondrion; the sequence is MASTVALKGRPLATLLRQLLAADAPPAATGRP. Residues 26-48 form a disordered region; it reads PAATGRPVAAAPAASGKPVTAPA. One can recognise a sHSP domain in the interval 139–248; it reads ATAAARRGGW…RKDVFQVNVE (110 aa).

Belongs to the small heat shock protein (HSP20) family. In terms of assembly, may form oligomeric structures.

It localises to the mitochondrion. This Oryza sativa subsp. japonica (Rice) protein is 26.2 kDa heat shock protein, mitochondrial (HSP26.2).